Reading from the N-terminus, the 861-residue chain is MSEEPTPVSGNDKQLLNKAWEITQKKTFTAWCNSHLRKLGSSIEQIDTDFTDGIKLAQLLEVISNDPVFKVNKTPKLRIHNIQNVGLCLKHIESHGVKLVGIGAEELVDKNLKMTLGMIWTIILRFAIQDISIEELSAKEALLLWCQRKTEGYDRVKVGNFHTSFQDGLAFCALIHKHRPDLINFDSLNKDDKAGNLQLAFDIAEKELDIPKMLDVSDMLDVVRPDERSVMTYVAQYYHHFSASRKAETAGKQVGKVLDTFMLLEQTKSDYLKRANELVQWINDKQASLESRDFGDSIESVQSFMNAHKEYKKTEKPPKGQEVSELEAIYNSLQTKLRLIKREPFVAPAGLTPNEIDSTWSALEKAEQEHAEALRIELKRQKKIAVLLQKYNRILKKLENWATTKSVYLGSNETGDSITAVQAKLKNLEAFDGECQSLEGQSNSDLLSILAQLTELNYNGVPELTERKDTFFAQQWTGVKSSAETYKNTLLAELERLQKIEDSLVEFAKRAAQLNVWIEAADDHVFDPINVDSVQGVQEIQEKFDAFLHDQSQQFAELEALAALTQQLRELGRSENDYSVISYDELSAKWNNLLAGIEERKVQLANELTTQTNNDVLCQSFSVKANEISDYVRVTLDAISQNTSSDPQEQLNNIRAIITAHAEKKPELDELYTIASQLEEAQVVDNKHTQHSLESIKLKWDKLNTLAKKNEQVVEGEILAKQLTGVTAEELSEFKACFSHFDKDNDNKLNRLEFSSCLKSIGDELTEEQLNQVISKIDTDGNGTISFEEFIDYMVSSRKGTDSVESTKAAFKVMAEDKDFITEAQIRAAISDSKQIDYLLASMPAVEGGFDYNSFAEKLYQ.

Residues Met-1–His-239 form an actin-binding region. Calponin-homology (CH) domains lie at Ile-22–Ala-127 and Leu-136–Ser-242. Spectrin repeat units lie at residues His-240–Lys-365, Ala-366–Lys-480, Ser-481–Lys-601, and Val-602–Val-714. EF-hand domains follow at residues Glu-729 to Glu-764 and Leu-765 to Gly-800. Residues Asp-742, Asp-744, Asp-746, Lys-748, Glu-753, Asp-778, Asp-780, Asn-782, Thr-784, and Glu-789 each coordinate Ca(2+).

The protein belongs to the alpha-actinin family. Homodimer; antiparallel.

It localises to the cytoplasm. The protein resides in the cell cortex. Its subcellular location is the contractile vacuole. It is found in the cytoplasmic vesicle. The protein localises to the phagosome. F-actin cross-linking protein which is thought to anchor actin to a variety of intracellular structures. This is a bundling protein. Increases the actin-stimulated ATPase activity of myosin. Involved in vegetative cell growth, phagocytosis, motility and development, probably through stabilization of the actin network in the cortical cytoskeleton. The sequence is that of Alpha-actinin A (abpA) from Dictyostelium discoideum (Social amoeba).